The primary structure comprises 1368 residues: DNA-directed RNA polymerase subunit beta (1368 aa).

It belongs to the RNA polymerase beta chain family. As to quaternary structure, the RNAP catalytic core consists of 2 alpha, 1 beta, 1 beta' and 1 omega subunit. When a sigma factor is associated with the core the holoenzyme is formed, which can initiate transcription.

The catalysed reaction is RNA(n) + a ribonucleoside 5'-triphosphate = RNA(n+1) + diphosphate. Its function is as follows. DNA-dependent RNA polymerase catalyzes the transcription of DNA into RNA using the four ribonucleoside triphosphates as substrates. This is DNA-directed RNA polymerase subunit beta from Paraburkholderia phymatum (strain DSM 17167 / CIP 108236 / LMG 21445 / STM815) (Burkholderia phymatum).